Reading from the N-terminus, the 665-residue chain is UvrABC system protein B (665 aa).

In terms of domain architecture, Helicase ATP-binding spans 31–414 (DGVKGGEKAQ…EMEQTETVVQ (384 aa)). 44–51 (GATGTGKT) contributes to the ATP binding site. The Beta-hairpin signature appears at 97-120 (YYDYYQPEAYVPSSDTYIEKDSSI). Residues 435–601 (QIDDLVGEIH…TIIKEIRDLI (167 aa)) enclose the Helicase C-terminal domain. In terms of domain architecture, UVR spans 629-664 (ADLLMKLEREMKDAAKALDFETAATLRDTILELKAA).

The protein belongs to the UvrB family. As to quaternary structure, forms a heterotetramer with UvrA during the search for lesions. Interacts with UvrC in an incision complex.

It localises to the cytoplasm. The UvrABC repair system catalyzes the recognition and processing of DNA lesions. A damage recognition complex composed of 2 UvrA and 2 UvrB subunits scans DNA for abnormalities. Upon binding of the UvrA(2)B(2) complex to a putative damaged site, the DNA wraps around one UvrB monomer. DNA wrap is dependent on ATP binding by UvrB and probably causes local melting of the DNA helix, facilitating insertion of UvrB beta-hairpin between the DNA strands. Then UvrB probes one DNA strand for the presence of a lesion. If a lesion is found the UvrA subunits dissociate and the UvrB-DNA preincision complex is formed. This complex is subsequently bound by UvrC and the second UvrB is released. If no lesion is found, the DNA wraps around the other UvrB subunit that will check the other stand for damage. This chain is UvrABC system protein B, found in Enterococcus faecalis (strain ATCC 700802 / V583).